A 116-amino-acid chain; its full sequence is Phosphoribosyl-ATP pyrophosphatase (116 aa).

This sequence belongs to the PRA-PH family.

It localises to the cytoplasm. It carries out the reaction 1-(5-phospho-beta-D-ribosyl)-ATP + H2O = 1-(5-phospho-beta-D-ribosyl)-5'-AMP + diphosphate + H(+). Its pathway is amino-acid biosynthesis; L-histidine biosynthesis; L-histidine from 5-phospho-alpha-D-ribose 1-diphosphate: step 2/9. The sequence is that of Phosphoribosyl-ATP pyrophosphatase from Nitrobacter winogradskyi (strain ATCC 25391 / DSM 10237 / CIP 104748 / NCIMB 11846 / Nb-255).